Reading from the N-terminus, the 387-residue chain is 3-ketoacyl-CoA thiolase (387 aa).

Catalysis depends on cysteine 91, which acts as the Acyl-thioester intermediate. Residues histidine 343 and cysteine 373 each act as proton acceptor in the active site.

This sequence belongs to the thiolase-like superfamily. Thiolase family. As to quaternary structure, heterotetramer of two alpha chains (FadB) and two beta chains (FadA).

It localises to the cytoplasm. It catalyses the reaction an acyl-CoA + acetyl-CoA = a 3-oxoacyl-CoA + CoA. Its pathway is lipid metabolism; fatty acid beta-oxidation. In terms of biological role, catalyzes the final step of fatty acid oxidation in which acetyl-CoA is released and the CoA ester of a fatty acid two carbons shorter is formed. The chain is 3-ketoacyl-CoA thiolase from Shewanella oneidensis (strain ATCC 700550 / JCM 31522 / CIP 106686 / LMG 19005 / NCIMB 14063 / MR-1).